The primary structure comprises 101 residues: MAKVGMRERELKREKTVAKYAEKRAALKAIIANPNVSDEERWEAQMKLQKLPRDASPSRLRNRCQVTGRPHAVLRKFRLSRIKLREAAMRGDVPGLKKASW.

Belongs to the universal ribosomal protein uS14 family. As to quaternary structure, part of the 30S ribosomal subunit. Contacts proteins S3 and S10.

In terms of biological role, binds 16S rRNA, required for the assembly of 30S particles and may also be responsible for determining the conformation of the 16S rRNA at the A site. The protein is Small ribosomal subunit protein uS14 of Hahella chejuensis (strain KCTC 2396).